Consider the following 315-residue polypeptide: Olfactory receptor 10A4 (315 aa).

The Extracellular segment spans residues 1-26; sequence MMWENWTIVSEFVLVSFSALSTELQA. The N-linked (GlcNAc...) asparagine glycan is linked to asparagine 5. A helical membrane pass occupies residues 27-47; the sequence is LLFLLFLTIYLVTLMGNVLII. Topologically, residues 48–55 are cytoplasmic; the sequence is LVTIADSA. Residues 56–76 form a helical membrane-spanning segment; the sequence is LQSPMYFFLRNLSFLEIGFNL. The Extracellular segment spans residues 77 to 100; sequence VIVPKMLGTLIIQDTTISFLGCAT. Cysteine 98 and cysteine 190 form a disulfide bridge. A helical membrane pass occupies residues 101-121; the sequence is QMYFFFFFGAAECCLLATMAY. The Cytoplasmic portion of the chain corresponds to 122–140; that stretch reads DRYVAICDPLHYPVIMGHI. The helical transmembrane segment at 141–161 threads the bilayer; sequence SCAQLAAASWFSGFSVATVQT. At 162-198 the chain is on the extracellular side; sequence TWIFSFPFCGPNRVNHFFCDSPPVIALVCADTSVFEL. Residues 199-218 form a helical membrane-spanning segment; it reads EALTATVLFILFPFLLILGS. Residues 219 to 238 lie on the Cytoplasmic side of the membrane; sequence YVRILSTIFRMPSAEGKHQA. Residues 239 to 259 form a helical membrane-spanning segment; it reads FSTCSAHLLVVSLFYSTAILT. Over 260 to 272 the chain is Extracellular; sequence YFRPQSSASSESK. The chain crosses the membrane as a helical span at residues 273–293; it reads KLLSLSSTVVTPMLNPIIYSS. Over 294–315 the chain is Cytoplasmic; the sequence is RNKEVKAALKRLIHRTLGSQKL.

It belongs to the G-protein coupled receptor 1 family. As to expression, expressed in the tongue.

It is found in the cell membrane. Functionally, odorant receptor (Potential). May be involved in taste perception. This is Olfactory receptor 10A4 (OR10A4) from Homo sapiens (Human).